Consider the following 590-residue polypeptide: Aspartate--tRNA(Asp/Asn) ligase (590 aa).

Residue E170 coordinates L-aspartate. The aspartate stretch occupies residues Q194–K197. R216 contributes to the L-aspartate binding site. ATP is bound by residues R216–E218 and Q225. H448 contributes to the L-aspartate binding site. An ATP-binding site is contributed by E482. Residue R489 participates in L-aspartate binding. Residue G534–R537 coordinates ATP. The disordered stretch occupies residues G559–A590. Residues Q575–A590 are compositionally biased toward basic and acidic residues.

This sequence belongs to the class-II aminoacyl-tRNA synthetase family. Type 1 subfamily. Homodimer.

It is found in the cytoplasm. It carries out the reaction tRNA(Asx) + L-aspartate + ATP = L-aspartyl-tRNA(Asx) + AMP + diphosphate. In terms of biological role, aspartyl-tRNA synthetase with relaxed tRNA specificity since it is able to aspartylate not only its cognate tRNA(Asp) but also tRNA(Asn). Reaction proceeds in two steps: L-aspartate is first activated by ATP to form Asp-AMP and then transferred to the acceptor end of tRNA(Asp/Asn). This Mycolicibacterium gilvum (strain PYR-GCK) (Mycobacterium gilvum (strain PYR-GCK)) protein is Aspartate--tRNA(Asp/Asn) ligase.